The chain runs to 339 residues: Dihydroorotate dehydrogenase (quinone) (339 aa).

FMN contacts are provided by residues 62–66 (AGMDK) and Thr86. Position 66 (Lys66) interacts with substrate. 111-115 (NRMGF) lines the substrate pocket. Positions 139 and 172 each coordinate FMN. Asn172 contacts substrate. The active-site Nucleophile is Ser175. Asn177 provides a ligand contact to substrate. Residues Lys217 and Thr245 each coordinate FMN. 246 to 247 (NT) is a binding site for substrate. Residues Gly268, Gly297, and 318–319 (YS) contribute to the FMN site.

The protein belongs to the dihydroorotate dehydrogenase family. Type 2 subfamily. In terms of assembly, monomer. It depends on FMN as a cofactor.

The protein resides in the cell membrane. The catalysed reaction is (S)-dihydroorotate + a quinone = orotate + a quinol. Its pathway is pyrimidine metabolism; UMP biosynthesis via de novo pathway; orotate from (S)-dihydroorotate (quinone route): step 1/1. Its function is as follows. Catalyzes the conversion of dihydroorotate to orotate with quinone as electron acceptor. In Shewanella baltica (strain OS185), this protein is Dihydroorotate dehydrogenase (quinone).